The primary structure comprises 712 residues: Protein phosphatase 1 regulatory subunit 37 (712 aa).

The span at 1–12 (MEIPPQEAPPGP) shows a compositional bias: pro residues. Positions 1-47 (MEIPPQEAPPGPGADADADAEAETEEASAEAESPTGTSPPADGRLKA) are disordered. A compositionally biased stretch (acidic residues) spans 16–29 (ADADAEAETEEASA). A phosphoserine mark is found at serine 56 and serine 62. 5 LRR repeats span residues 226–246 (SLAVLHLENASLSGRPLMLLA), 254–275 (NLRELYLADNKLNGLQDSAQLG), 283–303 (SLQILDLRNNHVLDSGLAYIC), 312–332 (GLVTLVLWNNQLTHTGMAFLG), and 340–360 (SLETLNLGHNPIGNEGVRNLK). A disordered region spans residues 492 to 680 (ESGELPAVGS…PPGLEAKGGS (189 aa)). Over residues 514–531 (SDSDSDSDREEQEEEEED) the composition is skewed to acidic residues. Phosphoserine is present on serine 583. Residues 605 to 626 (PPVPPTFVSSPPPSPPSPPASP) are compositionally biased toward pro residues. The segment covering 639–651 (SEAQPQLEPSQAG) has biased composition (polar residues).

The protein belongs to the PPP1R37 family. In terms of assembly, interacts with PPP1CA.

In terms of biological role, inhibits phosphatase activity of protein phosphatase 1 (PP1) complexes. This is Protein phosphatase 1 regulatory subunit 37 (Ppp1r37) from Mus musculus (Mouse).